The primary structure comprises 226 residues: Glutathione S-transferase kappa 1 (226 aa).

A glutathione-binding site is contributed by 16 to 18 (SPY). Lysine 49 carries the N6-succinyllysine modification. Asparagine 53 is a glutathione binding site. N6-acetyllysine occurs at positions 71 and 85. The residue at position 116 (lysine 116) is an N6-acetyllysine; alternate. Residue lysine 116 is modified to N6-succinyllysine; alternate. Lysine 144 carries the post-translational modification N6-succinyllysine. At lysine 158 the chain carries N6-acetyllysine; alternate. Lysine 158 is modified (N6-succinyllysine; alternate). An N6-acetyllysine mark is found at lysine 165 and lysine 169. Residues leucine 183 and 200-201 (SD) each bind glutathione.

Belongs to the GST superfamily. Kappa family. Homodimer. In terms of tissue distribution, ubiquitous.

Its subcellular location is the peroxisome. The enzyme catalyses RX + glutathione = an S-substituted glutathione + a halide anion + H(+). In terms of biological role, glutathione S-transferase that catalyzes the conjugation of glutathione to exogenous and endogenous compounds. Significant glutathione conjugating activity is found only with the model substrate, 1-chloro-2,4-dinitrobenzene (CDNB). This chain is Glutathione S-transferase kappa 1 (GSTK1), found in Homo sapiens (Human).